Reading from the N-terminus, the 1480-residue chain is Nonribosomal peptide synthetase inpA (1480 aa).

Positions 1 to 17 (MSHSMSSSSSSSSSSSS) are enriched in low complexity. Residues 1–24 (MSHSMSSSSSSSSSSSSSRDEGQS) are disordered. A condensation region spans residues 44–458 (VQDVYPCTPL…QLISPQDLDQ (415 aa)). An adenylation region spans residues 479–871 (QRHIDTRPDA…GRKDSQVKIR (393 aa)). The 80-residue stretch at 1003–1082 (DSTNKVALRL…GLAAMITSPH (80 aa)) folds into the Carrier domain. The residue at position 1041 (serine 1041) is an O-(pantetheine 4'-phosphoryl)serine. The thioesterase (TE) domain stretch occupies residues 1117–1436 (KVFLTGATGL…VLAMLQDPQM (320 aa)).

Belongs to the NRP synthetase family.

The protein operates within secondary metabolite biosynthesis. Nonribosomal peptide synthetase; part of the inp gene cluster that mediates the biosynthesis of fellutamide B, a mycotoxin that acts as a proteasome inhibitor. In the first step of fellutabmide B biosynthesis, inpC activates 3-hydroxydodecanoic acid to generate 3-hydroxydodecanoyl-AMP that is then loaded onto the T0 domain of inpB. The 3-hydroxydodecanoyl-S-phosphopantetheinyl-T0 is sequentially extended with L-Asn and L-Gln by the two CAT modules of inpB. The linear lipodipeptide from inpB is then transferred onto inpA for the addition of the third amino acid, L-Leu. Reductive releasing of the lipotripeptide by the TE domain of inpA produces (2S)-fellutamide B. InpF might be involved in the release and transfer of the lipodipeptide from inpB to inpA. The inp cluster-encoded proteasome subunit inpE confers resistance to internally produced fellutamides. The MFS efflux transporter inpD may contribute to fellutamide resistance as well. This Emericella nidulans (strain FGSC A4 / ATCC 38163 / CBS 112.46 / NRRL 194 / M139) (Aspergillus nidulans) protein is Nonribosomal peptide synthetase inpA.